The primary structure comprises 197 residues: MVNYPSGVRAGGYPQKKKNQNIRYGKRGMGLEEMINQANDYYLVNHQAVIHKKPTPITVVHVDYPDRSMAKITEAYYVQPSTTDYNGVVSGKYIDFDAKETKNKTNMPLKNFHQHQITHLKNVLENGGIGFLVLGFTTLSEYYIFPASLLIKIWDKAKAGGEKSLPYKIVSKQGIKINSKMIPSLDYLPALKKLFNI.

Residues 1-21 form a disordered region; that stretch reads MVNYPSGVRAGGYPQKKKNQN. Mg(2+) contacts are provided by Thr82, Asp84, Asp97, and Gln116.

It belongs to the RecU family. The cofactor is Mg(2+).

The protein localises to the cytoplasm. It carries out the reaction Endonucleolytic cleavage at a junction such as a reciprocal single-stranded crossover between two homologous DNA duplexes (Holliday junction).. Its function is as follows. Endonuclease that resolves Holliday junction intermediates in genetic recombination. Cleaves mobile four-strand junctions by introducing symmetrical nicks in paired strands. Promotes annealing of linear ssDNA with homologous dsDNA. Required for DNA repair, homologous recombination and chromosome segregation. The chain is Holliday junction resolvase RecU from Oenococcus oeni (strain ATCC BAA-331 / PSU-1).